We begin with the raw amino-acid sequence, 123 residues long: Zinc metalloproteinase-disintegrin-like jerdohagin (123 aa).

The 47-residue stretch at 6 to 52 (RYLYIRHDREACTCHANSCIMSAYFSNSHVQYENYINDCKPQCILNE) folds into the Peptidase M12B domain. A Zn(2+)-binding site is contributed by H12. Cysteines 19 and 24 form a disulfide. Positions 48 and 51 each coordinate Ca(2+). The Disintegrin domain occupies 53–80 (LHSWVECESGECCEQCRSECDIAESCTN). 4 disulfide bridges follow: C59-C65, C64-C78, C72-C90, and C106-C116. The D/ECD-tripeptide motif lies at 71-73 (ECD).

It belongs to the venom metalloproteinase (M12B) family. P-III subfamily. P-IIIa sub-subfamily. Monomer. Requires Zn(2+) as cofactor. Post-translationally, the N-terminus is blocked. Expressed by the venom gland.

It localises to the secreted. Its proteolytic and hemorrhagic activities are inhibited by EDTA, but not by PMSF. Its function is as follows. Snake venom metalloproteinase that has high hemorrhagic activity and degrades the alpha-chain of fibrinogen (FGA), leaving the beta- and the gamma-chain intact. It may also inhibit platelet aggregation. Cleaves insulin B chain at '25-Phe-|-Val-26', '26-Val-|-Asn-27', '29-His-|-Leu-30', '30-Leu-|-Cys-31', '33-Ser-|-His-34', '35-Leu-|-Val-36', '40-Tyr-|-Leu-41', '41-Leu-|-Val-42', '42-Val-|-Cys-43', '43-Cys-|-Gly-44', '44-Gly-|-Glu-45', '46-Arg-|-Gly-47', '47-Gly-|-Phe-48', '49-Phe-|-Tyr-50' and '52-Pro-|-Lys-53' bonds. Also cleaves human prothrombin (72 kDa) and activation fragment F1 (27 kDa) of activated human prothrombin, to generate two new proteins of 68 and 23 kDa. This is Zinc metalloproteinase-disintegrin-like jerdohagin from Protobothrops jerdonii (Jerdon's pitviper).